The sequence spans 225 residues: THAP domain-containing protein 1 B (225 aa).

The THAP-type zinc-finger motif lies at 5–57 (CSAYGCKNRYDKDRPISFHKFPLKRPLLCKKWEAAVRRADFKPTKYSSICSDH). A coiled-coil region spans residues 139–194 (VEDTVHQRRRIQQLEEQVDKLRKKLKIANQKCRRQERSLEKLEKEVSEYREAKGSG).

The protein belongs to the THAP1 family.

It is found in the nucleus. It localises to the nucleoplasm. DNA-binding transcription regulator that regulates endothelial cell proliferation and G1/S cell-cycle progression. Specifically binds the 5'-[AT]NTNN[GT]GGCA[AGT]-3' core DNA sequence and acts by modulating expression of pRB-E2F cell-cycle target genes. In Xenopus laevis (African clawed frog), this protein is THAP domain-containing protein 1 B (thap1-b).